The chain runs to 161 residues: UPF0178 protein Rsph17025_3122 (161 aa).

It belongs to the UPF0178 family.

The polypeptide is UPF0178 protein Rsph17025_3122 (Cereibacter sphaeroides (strain ATCC 17025 / ATH 2.4.3) (Rhodobacter sphaeroides)).